Reading from the N-terminus, the 347-residue chain is Heat-inducible transcription repressor HrcA (347 aa).

The protein belongs to the HrcA family.

Its function is as follows. Negative regulator of class I heat shock genes (grpE-dnaK-dnaJ and groELS operons). Prevents heat-shock induction of these operons. This is Heat-inducible transcription repressor HrcA from Desulforamulus reducens (strain ATCC BAA-1160 / DSM 100696 / MI-1) (Desulfotomaculum reducens).